The chain runs to 472 residues: Threonine synthase-like 2 (472 aa).

Lysine 113 is modified (N6-(pyridoxal phosphate)lysine).

The protein belongs to the threonine synthase family. It depends on pyridoxal 5'-phosphate as a cofactor.

Functionally, acts as a catabolic phospho-lyase on both gamma- and beta-phosphorylated substrates. Degrades O-phospho-threonine (PThr) to alpha-ketobutyrate, ammonia and phosphate. This is Threonine synthase-like 2 (thnsl2) from Xenopus laevis (African clawed frog).